Consider the following 537-residue polypeptide: Phosphoenolpyruvate carboxykinase (ATP) (537 aa).

Residues Arg61, Tyr195, and Lys201 each contribute to the substrate site. ATP is bound by residues Lys201, His220, and 236–244; that span reads GLSGTGKTT. The Mn(2+) site is built by Lys201 and His220. Residue Asp257 coordinates Mn(2+). Glu285, Arg323, and Thr448 together coordinate ATP. A substrate-binding site is contributed by Arg323.

It belongs to the phosphoenolpyruvate carboxykinase (ATP) family. Mn(2+) serves as cofactor.

It is found in the cytoplasm. It catalyses the reaction oxaloacetate + ATP = phosphoenolpyruvate + ADP + CO2. It participates in carbohydrate biosynthesis; gluconeogenesis. Functionally, involved in the gluconeogenesis. Catalyzes the conversion of oxaloacetate (OAA) to phosphoenolpyruvate (PEP) through direct phosphoryl transfer between the nucleoside triphosphate and OAA. This is Phosphoenolpyruvate carboxykinase (ATP) from Rhodopseudomonas palustris (strain TIE-1).